A 408-amino-acid chain; its full sequence is Cell division protein FtsZ 2 (408 aa).

Residues 130–132, E169, R173, and D216 each bind GTP; that span reads GTG.

The protein belongs to the FtsZ family. Homodimer. Polymerizes to form a dynamic ring structure in a strictly GTP-dependent manner. Interacts directly with several other division proteins.

Its subcellular location is the cytoplasm. Essential cell division protein that forms a contractile ring structure (Z ring) at the future cell division site. The regulation of the ring assembly controls the timing and the location of cell division. One of the functions of the FtsZ ring is to recruit other cell division proteins to the septum to produce a new cell wall between the dividing cells. Binds GTP and shows GTPase activity. The chain is Cell division protein FtsZ 2 from Pyrococcus furiosus (strain ATCC 43587 / DSM 3638 / JCM 8422 / Vc1).